A 351-amino-acid chain; its full sequence is Uroporphyrinogen decarboxylase (351 aa).

Substrate-binding positions include 25 to 29 (RQAGR), aspartate 74, tyrosine 151, serine 206, and histidine 325.

It belongs to the uroporphyrinogen decarboxylase family. In terms of assembly, homodimer.

The protein localises to the cytoplasm. It carries out the reaction uroporphyrinogen III + 4 H(+) = coproporphyrinogen III + 4 CO2. The protein operates within porphyrin-containing compound metabolism; protoporphyrin-IX biosynthesis; coproporphyrinogen-III from 5-aminolevulinate: step 4/4. Catalyzes the decarboxylation of four acetate groups of uroporphyrinogen-III to yield coproporphyrinogen-III. This Chlorobium phaeovibrioides (strain DSM 265 / 1930) (Prosthecochloris vibrioformis (strain DSM 265)) protein is Uroporphyrinogen decarboxylase.